We begin with the raw amino-acid sequence, 918 residues long: UPF0182 protein CPR_0011 (918 aa).

Transmembrane regions (helical) follow at residues 8 to 28, 46 to 66, 91 to 111, 151 to 171, 200 to 220, 243 to 263, and 271 to 291; these read TVLI…NFII, LIAI…VIAI, FLLS…TTQW, AISL…ALGF, LAVL…LKSY, IFYK…FISI, and IIIS…VAIF.

It belongs to the UPF0182 family.

It is found in the cell membrane. This Clostridium perfringens (strain SM101 / Type A) protein is UPF0182 protein CPR_0011.